A 426-amino-acid polypeptide reads, in one-letter code: Serine--tRNA ligase (426 aa).

231 to 233 (TLE) provides a ligand contact to L-serine. Position 262–264 (262–264 (RSE)) interacts with ATP. L-serine is bound at residue E285. An ATP-binding site is contributed by 349–352 (EISS). S385 contributes to the L-serine binding site.

The protein belongs to the class-II aminoacyl-tRNA synthetase family. Type-1 seryl-tRNA synthetase subfamily. Homodimer. The tRNA molecule binds across the dimer.

The protein resides in the cytoplasm. It catalyses the reaction tRNA(Ser) + L-serine + ATP = L-seryl-tRNA(Ser) + AMP + diphosphate + H(+). The enzyme catalyses tRNA(Sec) + L-serine + ATP = L-seryl-tRNA(Sec) + AMP + diphosphate + H(+). Its pathway is aminoacyl-tRNA biosynthesis; selenocysteinyl-tRNA(Sec) biosynthesis; L-seryl-tRNA(Sec) from L-serine and tRNA(Sec): step 1/1. Its function is as follows. Catalyzes the attachment of serine to tRNA(Ser). Is also able to aminoacylate tRNA(Sec) with serine, to form the misacylated tRNA L-seryl-tRNA(Sec), which will be further converted into selenocysteinyl-tRNA(Sec). The sequence is that of Serine--tRNA ligase from Malacoplasma penetrans (strain HF-2) (Mycoplasma penetrans).